The chain runs to 400 residues: tRNA(Ile)-lysidine synthase (400 aa).

25 to 30 contacts ATP; the sequence is SGGVDS.

The protein belongs to the tRNA(Ile)-lysidine synthase family.

The protein resides in the cytoplasm. The catalysed reaction is cytidine(34) in tRNA(Ile2) + L-lysine + ATP = lysidine(34) in tRNA(Ile2) + AMP + diphosphate + H(+). In terms of biological role, ligates lysine onto the cytidine present at position 34 of the AUA codon-specific tRNA(Ile) that contains the anticodon CAU, in an ATP-dependent manner. Cytidine is converted to lysidine, thus changing the amino acid specificity of the tRNA from methionine to isoleucine. In Francisella philomiragia subsp. philomiragia (strain ATCC 25017 / CCUG 19701 / FSC 153 / O#319-036), this protein is tRNA(Ile)-lysidine synthase.